Here is a 138-residue protein sequence, read N- to C-terminus: Large-conductance mechanosensitive channel (138 aa).

Transmembrane regions (helical) follow at residues 19-39, 40-60, and 81-101; these read VGVI…GDVI, MPVI…IGLS, and GSFL…FIVI.

It belongs to the MscL family. As to quaternary structure, homopentamer.

Its subcellular location is the cell inner membrane. Channel that opens in response to stretch forces in the membrane lipid bilayer. May participate in the regulation of osmotic pressure changes within the cell. The polypeptide is Large-conductance mechanosensitive channel (Afipia carboxidovorans (strain ATCC 49405 / DSM 1227 / KCTC 32145 / OM5) (Oligotropha carboxidovorans)).